The following is a 685-amino-acid chain: MTRKILVTSALPYANGSIHLGHMVEHIQTDVWVRFQKLRGNECHYCCADDTHGTPVMLAAQKQGIAPEDMIAKVREEHLADFTGFFIGYDNYYSTHSPENKQFSQDIYRALKANGKIESRVIEQLFDPEKQMFLPDRFVKGECPKCHAQDQYGDNCEVCGTTYSPTELINPYSAVSGAKPELRESEHFFFKLGECADFLKAWTSGNNPHDGKPHLQAEALNKMKEWLGEGEETTLSDWDISRDAPYFGFEIPDAPGKYFYVWLDAPVGYMASFKNLCDRIGVDFDEYFKADSQTEMYHFIGKDILYFHALFWPAMLHFSGHRAPTGVYAHGFLTVDGQKMSKSRGTFITAKSYLEQGLNPEWMRYYIAAKLNSKIEDIDLNLQDFISRVNSDLVGKYVNIAARASGFIAKRFEGRLKDVADSELLAKLTAQSEAIAECYESREYARALRDIMALADIVNEYVDANKPWELAKQEGQDARLHEVCSELINAFTMLTAYLAPVLPQTAANAAKFLNLEAITWANTRETLGKHAINKYEHLMQRVEQKQVDDLIEANKQSIQTTPAPAAEESQYEKVAEQASFDDFMKIDMRVAKVLNCEAVEGSTKLLKFDLDFGFEKRIIFSGIAASYPNPAELNGRMVIAVANFAPRKMAKFGVSEGMILSAATADGKLKLLDVDAGAQPGDKVG.

Positions 12–22 match the 'HIGH' region motif; sequence PYANGSIHLGH. 4 residues coordinate Zn(2+): Cys-143, Cys-146, Cys-156, and Cys-159. The 'KMSKS' region motif lies at 339–343; sequence KMSKS. An ATP-binding site is contributed by Lys-342. Residues 582–685 form the tRNA-binding domain; it reads DFMKIDMRVA…AGAQPGDKVG (104 aa).

The protein belongs to the class-I aminoacyl-tRNA synthetase family. MetG type 1 subfamily. As to quaternary structure, homodimer. The cofactor is Zn(2+).

It is found in the cytoplasm. The catalysed reaction is tRNA(Met) + L-methionine + ATP = L-methionyl-tRNA(Met) + AMP + diphosphate. Its function is as follows. Is required not only for elongation of protein synthesis but also for the initiation of all mRNA translation through initiator tRNA(fMet) aminoacylation. The protein is Methionine--tRNA ligase of Neisseria meningitidis serogroup A / serotype 4A (strain DSM 15465 / Z2491).